Consider the following 207-residue polypeptide: Outer-membrane lipoprotein LolB (207 aa).

The first 21 residues, 1–21 (MPQRKISFYRLLPLATLLLAA), serve as a signal peptide directing secretion. The N-palmitoyl cysteine moiety is linked to residue Cys-22. The S-diacylglycerol cysteine moiety is linked to residue Cys-22.

It belongs to the LolB family. As to quaternary structure, monomer.

It localises to the cell outer membrane. Its function is as follows. Plays a critical role in the incorporation of lipoproteins in the outer membrane after they are released by the LolA protein. This chain is Outer-membrane lipoprotein LolB, found in Yersinia enterocolitica serotype O:8 / biotype 1B (strain NCTC 13174 / 8081).